We begin with the raw amino-acid sequence, 323 residues long: Methionyl-tRNA formyltransferase (323 aa).

Position 113-116 (113-116 (SLLP)) interacts with (6S)-5,6,7,8-tetrahydrofolate.

This sequence belongs to the Fmt family.

It catalyses the reaction L-methionyl-tRNA(fMet) + (6R)-10-formyltetrahydrofolate = N-formyl-L-methionyl-tRNA(fMet) + (6S)-5,6,7,8-tetrahydrofolate + H(+). Functionally, attaches a formyl group to the free amino group of methionyl-tRNA(fMet). The formyl group appears to play a dual role in the initiator identity of N-formylmethionyl-tRNA by promoting its recognition by IF2 and preventing the misappropriation of this tRNA by the elongation apparatus. This Porphyromonas gingivalis (strain ATCC 33277 / DSM 20709 / CIP 103683 / JCM 12257 / NCTC 11834 / 2561) protein is Methionyl-tRNA formyltransferase.